A 174-amino-acid chain; its full sequence is Repair DNA polymerase X (174 aa).

Residues 42–51 form an involved in ssDNA binding region; that stretch reads REEKMLNDVD. Mg(2+)-binding residues include Asp49 and Asp51. Cys81 and Cys86 are joined by a disulfide. Asp100 serves as a coordination point for Mg(2+).

It belongs to the DNA polymerase type-X family. Requires Mg(2+) as cofactor.

It localises to the virion. It catalyses the reaction DNA(n) + a 2'-deoxyribonucleoside 5'-triphosphate = DNA(n+1) + diphosphate. Its function is as follows. Error-prone polymerase lacking a proofreading 3'-5' exonuclease which catalyzes the gap-filling reaction during the DNA repair process. Specifically binds intermediates in the single-nucleotide base-excision repair process. Also catalyzes DNA polymerization with low nucleotide-insertion fidelity. Probably acts as a strategic DNA mutase, which gives rise to a rapid emergence of variants. Generates mismatched G-G pairs, in that case, the polymerase first binds the deoxynucleotide followed by mismatch formation. Together with the viral DNA ligase, fills the single nucleotide gaps generated by the AP endonuclease. Binds DNA with high affinity via the helix alphaE. The protein is Repair DNA polymerase X of African swine fever virus (isolate Tick/South Africa/Pretoriuskop Pr4/1996) (ASFV).